The sequence spans 199 residues: Putative pseudouridine methyltransferase (199 aa).

Met132 and Cys186 together coordinate S-adenosyl-L-methionine.

Belongs to the methyltransferase superfamily. TrmY family.

The protein resides in the cytoplasm. This chain is Putative pseudouridine methyltransferase, found in Vibrio atlanticus (strain LGP32) (Vibrio splendidus (strain Mel32)).